The primary structure comprises 61 residues: Sec-independent protein translocase protein TatA (61 aa).

The chain crosses the membrane as a helical span at residues 2–22; sequence GLSGISPLSLLLILAIIVALF.

The protein belongs to the TatA/E family. As to quaternary structure, the Tat system comprises two distinct complexes: a TatABC complex, containing multiple copies of TatA, TatB and TatC subunits, and a separate TatA complex, containing only TatA subunits. Substrates initially bind to the TatABC complex, which probably triggers association of the separate TatA complex to form the active translocon.

It localises to the cell inner membrane. Part of the twin-arginine translocation (Tat) system that transports large folded proteins containing a characteristic twin-arginine motif in their signal peptide across membranes. TatA could form the protein-conducting channel of the Tat system. In Legionella pneumophila (strain Paris), this protein is Sec-independent protein translocase protein TatA.